The chain runs to 520 residues: MSSKCDVVVVGGGISGMAAAKLLHDSGLNVIVLEARDRVGGRTYTVRNQQVKYVDLGGSYVGPTQNRILRLSKELGLETYKVNEVERLIHYVKGKSYPFRGPLPPVRNPITFLDLNNLWRTVDDMGREIPSDAPWKAPLAEQWDQMTMKELLDKLCWTESSKQLATLFVNLCVTAETHEVSALWFLWYVKQCGGTTRIISTTNGGQERKFVGGSGQVTERIKDLLGDRVKLERPVVHIDQTGENVLVETLNHEVYEAKYVISAIPPVLGMKIHFSPPLPMMRNQLITRVPLGSVIKCIVYYKEPFWRHKDYCGSMIIEGEEAPIAYTLDDSKPDGSCAAIIGFILAHKARKLARLTKEERLKKLCDLYAKVLGSKEALNPVHYEEKNWCEEQYSAGCYTTYFPPGIMTQYGRVLRQPVGRIYFAGTETATHWSGYMEGAVEAGERAAREILHAMGKIPEDEIWQSEPESVDVPAKPITTTFLERHLPSVPGLLRLIGLTAIFSATALGYLAHKRGLLVRV.

Position 2 is an N-acetylserine (Ser-2). Over 2 to 489 (SSKCDVVVVG…TFLERHLPSV (488 aa)) the chain is Cytoplasmic. Residue Lys-52 is modified to N6-acetyllysine. Position 397 is an S-8alpha-FAD cysteine (Cys-397). Residues 490 to 516 (PGLLRLIGLTAIFSATALGYLAHKRGL) traverse the membrane as a helical; Anchor for type IV membrane protein segment. At 517–520 (LVRV) the chain is on the mitochondrial intermembrane side.

This sequence belongs to the flavin monoamine oxidase family. In terms of assembly, monomer, homo- or heterodimer (containing two subunits of similar size). Each subunit contains a covalently bound flavin. Enzymatically active as monomer. Requires FAD as cofactor.

It localises to the mitochondrion outer membrane. The catalysed reaction is a secondary aliphatic amine + O2 + H2O = a primary amine + an aldehyde + H2O2. The enzyme catalyses (R)-adrenaline + O2 + H2O = (R)-3,4-dihydroxymandelaldehyde + methylamine + H2O2. It carries out the reaction a primary methyl amine + O2 + H2O = an aldehyde + H2O2 + NH4(+). It catalyses the reaction benzylamine + O2 + H2O = benzaldehyde + H2O2 + NH4(+). The catalysed reaction is dopamine + O2 + H2O = 3,4-dihydroxyphenylacetaldehyde + H2O2 + NH4(+). The enzyme catalyses tyramine + O2 + H2O = (4-hydroxyphenyl)acetaldehyde + H2O2 + NH4(+). It carries out the reaction (R)-noradrenaline + O2 + H2O = (R)-3,4-dihydroxymandelaldehyde + H2O2 + NH4(+). It catalyses the reaction 2-phenylethylamine + O2 + H2O = 2-phenylacetaldehyde + H2O2 + NH4(+). The catalysed reaction is N-acetylputrescine + O2 + H2O = 4-acetamidobutanal + H2O2 + NH4(+). Catalyzes the oxidative deamination of primary and some secondary amines such as neurotransmitters, and exogenous amines including the tertiary amine, neurotoxin 1-methyl-4-phenyl-1,2,3,6-tetrahydropyridine (MPTP), with concomitant reduction of oxygen to hydrogen peroxide and participates in the metabolism of neuroactive and vasoactive amines in the central nervous system and peripheral tissues. Preferentially degrades benzylamine and phenylethylamine. In Sus scrofa (Pig), this protein is Amine oxidase [flavin-containing] B.